We begin with the raw amino-acid sequence, 498 residues long: Dynein regulatory complex subunit 2 (498 aa).

Coiled coils occupy residues 98–160, 250–311, and 417–441; these read VIKS…RKTI, KDEK…KAQR, and SLRH…QYLD.

It belongs to the DRC2 family. As to quaternary structure, component of the nexin-dynein regulatory complex (N-DRC). Interacts with DRC1.

It localises to the cytoplasm. It is found in the cytoskeleton. The protein localises to the flagellum basal body. The protein resides in the cell projection. Its subcellular location is the cilium. It localises to the flagellum. It is found in the flagellum axoneme. Its function is as follows. Component of the nexin-dynein regulatory complex (N-DRC), a key regulator of ciliary/flagellar motility which maintains the alignment and integrity of the distal axoneme and regulates microtubule sliding in motile axonemes. Plays a critical role in the assembly of N-DRC and also stabilizes the assembly of multiple inner dynein arms and radial spokes. Coassembles with DRC1 to form a central scaffold needed for assembly of the N-DRC and its attachment to the outer doublet microtubules. The sequence is that of Dynein regulatory complex subunit 2 (CCDC65) from Bos taurus (Bovine).